The sequence spans 347 residues: D-alanine--D-alanine ligase (347 aa).

In terms of domain architecture, ATP-grasp spans 133 to 342 (KQAFAQASLP…FPDLVHRLIQ (210 aa)). 169-224 (ETELGYPCFVKPANLGSSVGIAKVRDRAELEAALDQAAALDRRLIIEAAIDNPREV) lines the ATP pocket. Mg(2+) contacts are provided by aspartate 296, glutamate 309, and asparagine 311.

The protein belongs to the D-alanine--D-alanine ligase family. Mg(2+) serves as cofactor. The cofactor is Mn(2+).

It localises to the cytoplasm. The enzyme catalyses 2 D-alanine + ATP = D-alanyl-D-alanine + ADP + phosphate + H(+). Its pathway is cell wall biogenesis; peptidoglycan biosynthesis. Its function is as follows. Cell wall formation. The sequence is that of D-alanine--D-alanine ligase from Synechococcus elongatus (strain ATCC 33912 / PCC 7942 / FACHB-805) (Anacystis nidulans R2).